A 222-amino-acid chain; its full sequence is Latexin (222 aa).

Residues Met-1–Lys-97 enclose the Cystatin LXN-type 1 domain. Lys-55 is modified (N6-acetyllysine). The interval Asn-98–Leu-117 is alpha-helical linker. One can recognise a Cystatin LXN-type 2 domain in the interval Glu-118–Glu-222.

This sequence belongs to the protease inhibitor I47 (latexin) family. Highly enriched in macrophages.

It localises to the cytoplasm. Hardly reversible, non-competitive, and potent inhibitor of CPA1, CPA2 and CPA4. May play a role in inflammation. The sequence is that of Latexin (Lxn) from Mus musculus (Mouse).